The following is a 689-amino-acid chain: Protein asunder (689 aa).

Residues 521–550 (NGARLKLSKAKDQYRLLYRELEQLIQLNAT) are a coiled coil. 2 disordered regions span residues 578–619 (GASL…SKRR) and 662–689 (PDFG…SVRS). Residues 599–614 (SSGSASGSSNSNSLLK) show a composition bias toward low complexity. Residues 613 to 619 (LKASKRR) carry the Nuclear localization signal (NLS) motif.

It belongs to the Integrator subunit 13 family. Belongs to the multiprotein complex Integrator, at least composed of IntS1, IntS2, IntS3, IntS4, omd/IntS5, IntS6, defl/IntS7, IntS8, IntS9, IntS10, IntS11, IntS12, asun/IntS13, IntS14 and IntS15. The core complex associates with protein phosphatase 2A subunits mts/PP2A and Pp2A-29B, to form the Integrator-PP2A (INTAC) complex. Phosphorylated.

The protein localises to the nucleus. It is found in the cytoplasm. Its subcellular location is the perinuclear region. In terms of biological role, component of the integrator complex, a multiprotein complex that terminates RNA polymerase II (Pol II) transcription in the promoter-proximal region of genes. The integrator complex provides a quality checkpoint during transcription elongation by driving premature transcription termination of transcripts that are unfavorably configured for transcriptional elongation: the complex terminates transcription by (1) catalyzing dephosphorylation of the C-terminal domain (CTD) of Pol II subunit Polr2A/Rbp1 and Spt5, and (2) degrading the exiting nascent RNA transcript via endonuclease activity. The integrator complex is also involved in the 3'-end processing of the U7 snRNA, and also the spliceosomal snRNAs U1, U2, U4 and U5. This Drosophila yakuba (Fruit fly) protein is Protein asunder (asun).